Consider the following 918-residue polypeptide: Leucine--tRNA ligase (918 aa).

Positions 40–51 (PYPSGVGLHVGH) match the 'HIGH' region motif. The 'KMSKS' region signature appears at 692 to 696 (KMSKS). Lysine 695 serves as a coordination point for ATP.

It belongs to the class-I aminoacyl-tRNA synthetase family.

It localises to the cytoplasm. It carries out the reaction tRNA(Leu) + L-leucine + ATP = L-leucyl-tRNA(Leu) + AMP + diphosphate. This chain is Leucine--tRNA ligase, found in Azobacteroides pseudotrichonymphae genomovar. CFP2.